The following is a 105-amino-acid chain: Nitrogen fixation nifHD1 region GlnB-like protein 1 (105 aa).

Belongs to the P(II) protein family.

Functionally, could be involved in the regulation of nitrogen fixation. This is Nitrogen fixation nifHD1 region GlnB-like protein 1 (glnBA) from Methanosarcina barkeri.